We begin with the raw amino-acid sequence, 420 residues long: Zinc finger and BTB domain-containing protein 42 (420 aa).

In terms of domain architecture, BTB spans 24–92 (CDCTVLVGDA…MYEGRLDLHN (69 aa)). Disordered stretches follow at residues 127–204 (TRTL…HPPC) and 222–247 (VKAE…PPPV). The segment covering 227–241 (DSFSEQDSSSPQSAD) has biased composition (low complexity). 4 C2H2-type zinc fingers span residues 292-314 (CICP…LSAH), 332-354 (PTCP…ERTH), 360-382 (YTCV…AVVH), and 388-411 (HACR…RKFH).

Belongs to the krueppel C2H2-type zinc-finger protein family. ZBTB18 subfamily. As to expression, highly expressed in skeletal muscle and ovary (at protein level). Low expression in brain, lung, spleen, liver and heart (at protein level). Not detected in kidney and intestines (at protein level). Also observed in testis and, at lower levels, in stomach and nervous system.

It is found in the cytoplasm. The protein resides in the nucleus. It localises to the nucleoplasm. Transcriptional repressor. Specifically binds DNA and probably acts by recruiting chromatin remodeling multiprotein complexes. This chain is Zinc finger and BTB domain-containing protein 42 (Zbtb42), found in Mus musculus (Mouse).